An 814-amino-acid chain; its full sequence is Plakophilin-2 (814 aa).

Residues 1 to 329 are required for binding to single-stranded DNA; sequence MAIPGSLGEC…MTLERAVNML (329 aa). Ser44 carries the phosphoserine modification. Arg46 carries the post-translational modification Omega-N-methylarginine. Phosphoserine occurs at positions 82 and 130. 8 ARM repeats span residues 200-240, 309-352, 354-393, 503-549, 604-644, 652-691, 696-737, and 740-782; these read TCQH…SIKG, CDCL…ESFQ, SEARKRVNQLQGIPKLLQLLKVQNEDVQRAVCGALRNLVF, PDGR…NLSY, PRGI…NLTA, SVARMVVQKENGLQHTRKMLHVGDPSVKKTAVSLLRNLSR, QNEI…NLMQ, and YQNA…SLWA.

This sequence belongs to the beta-catenin family. Interacts with DSC2. Interacts with JUP. Interacts with KRT5/CK5, KRT8/CK8, KRT14/CK14, KRT18/CK18 and VIM. Interacts (via N-terminus) with MARK3/C-TAK1. Interacts with DSP. Interacts with DSG1, DSG2 and DSG3. Interacts (via N-terminus) with CTNNB1. Interacts with CDH1. Interacts with the RNA polymerase III (Pol III) complex proteins POLR3A/RPC155, POLR3F/RPC39 and POLR3C/RPC82. Interacts with CTNNA3. Interacts (via N-terminus) with SCN5A/Nav1.5. Interacts with ANK3/ANKG and GJA1/CX43. As to expression, expressed in the heart (at protein level).

It localises to the nucleus. The protein localises to the cell junction. The protein resides in the desmosome. It is found in the cytoplasm. Functionally, a component of desmosome cell-cell junctions which are required for positive regulation of cellular adhesion. Regulates focal adhesion turnover resulting in changes in focal adhesion size, cell adhesion and cell spreading, potentially via transcriptional modulation of beta-integrins. Required to maintain gingival epithelial barrier function. Important component of the desmosome that is also required for localization of desmosome component proteins such as DSC2, DSG2 and JUP to the desmosome cell-cell junction. Required for the formation of desmosome cell junctions in cardiomyocytes, thereby required for the correct formation of the heart, specifically trabeculation and formation of the atria walls. Loss of desmosome cell junctions leads to mis-localization of DSP and DSG2 resulting in disruption of cell-cell adhesion and disordered intermediate filaments. Modulates profibrotic gene expression in cardiomyocytes via regulation of DSP expression and subsequent activation of downstream TGFB1 and MAPK14/p38 MAPK signaling. Required for cardiac sodium current propagation and electrical synchrony in cardiac myocytes, via ANK3 stabilization and modulation of SCN5A/Nav1.5 localization to cell-cell junctions. Required for mitochondrial function, nuclear envelope integrity and positive regulation of SIRT3 transcription via maintaining DES localization at its nuclear envelope and cell tip anchoring points, and thereby preserving regulation of the transcriptional program. Maintenance of nuclear envelope integrity protects against DNA damage and transcriptional dysregulation of genes, especially those involved in the electron transport chain, thereby preserving mitochondrial function and protecting against superoxide radical anion generation. Binds single-stranded DNA (ssDNA). May regulate the localization of GJA1 to gap junctions in intercalated disks of the heart. This chain is Plakophilin-2, found in Rattus norvegicus (Rat).